The following is a 242-amino-acid chain: Protein Thf1 (242 aa).

Positions 178–209 form a coiled coil; sequence SSDKLQKDLDLYRSNLDKMQQLLTVIEDTLEA. The tract at residues 212-242 is disordered; that stretch reads KKRASQKLEKKPEVVEEKEHKENEEQQQSSN. A compositionally biased stretch (basic and acidic residues) spans 217–235; that stretch reads QKLEKKPEVVEEKEHKENE.

The protein belongs to the THF1 family.

Its function is as follows. May be involved in photosynthetic membrane biogenesis. The chain is Protein Thf1 from Crocosphaera subtropica (strain ATCC 51142 / BH68) (Cyanothece sp. (strain ATCC 51142)).